The primary structure comprises 295 residues: Putative nudix hydrolase 7 (295 aa).

Residues 9-182 (SWRSAASIIL…KYALPPPQVY (174 aa)) enclose the Nudix hydrolase domain. The short motif at 52-73 (TDAKLGDEFRIAAVRELFEESG) is the Nudix box element. Mg(2+) contacts are provided by glutamate 67 and glutamate 71.

Belongs to the Nudix hydrolase family. It depends on Mg(2+) as a cofactor. The cofactor is Mn(2+).

Its function is as follows. Probably mediates the hydrolysis of some nucleoside diphosphate derivatives. The polypeptide is Putative nudix hydrolase 7 (ndx-7) (Caenorhabditis elegans).